The chain runs to 55 residues: Large ribosomal subunit protein bL33 (55 aa).

Residues 1-11 (MAKGGREKIKL) show a composition bias toward basic and acidic residues. The tract at residues 1–29 (MAKGGREKIKLESTAGTGHFYTTTKNKKT) is disordered. The span at 14–24 (TAGTGHFYTTT) shows a compositional bias: polar residues.

This sequence belongs to the bacterial ribosomal protein bL33 family.

The polypeptide is Large ribosomal subunit protein bL33 (Thiobacillus denitrificans (strain ATCC 25259 / T1)).